A 157-amino-acid polypeptide reads, in one-letter code: Crossover junction endodeoxyribonuclease RuvC (157 aa).

Catalysis depends on residues Asp7, Glu67, and Asp140. The Mg(2+) site is built by Asp7, Glu67, and Asp140.

The protein belongs to the RuvC family. Homodimer which binds Holliday junction (HJ) DNA. The HJ becomes 2-fold symmetrical on binding to RuvC with unstacked arms; it has a different conformation from HJ DNA in complex with RuvA. In the full resolvosome a probable DNA-RuvA(4)-RuvB(12)-RuvC(2) complex forms which resolves the HJ. It depends on Mg(2+) as a cofactor.

It localises to the cytoplasm. The enzyme catalyses Endonucleolytic cleavage at a junction such as a reciprocal single-stranded crossover between two homologous DNA duplexes (Holliday junction).. In terms of biological role, the RuvA-RuvB-RuvC complex processes Holliday junction (HJ) DNA during genetic recombination and DNA repair. Endonuclease that resolves HJ intermediates. Cleaves cruciform DNA by making single-stranded nicks across the HJ at symmetrical positions within the homologous arms, yielding a 5'-phosphate and a 3'-hydroxyl group; requires a central core of homology in the junction. The consensus cleavage sequence is 5'-(A/T)TT(C/G)-3'. Cleavage occurs on the 3'-side of the TT dinucleotide at the point of strand exchange. HJ branch migration catalyzed by RuvA-RuvB allows RuvC to scan DNA until it finds its consensus sequence, where it cleaves and resolves the cruciform DNA. This is Crossover junction endodeoxyribonuclease RuvC from Rickettsia bellii (strain OSU 85-389).